Consider the following 1237-residue polypeptide: Anion exchange protein 2 (1237 aa).

The tract at residues 1 to 238 (MSSAPRRPAS…YNLQERRRIG (238 aa)) is disordered. Residues 1–703 (MSSAPRRPAS…SDFRDALDPQ (703 aa)) lie on the Cytoplasmic side of the membrane. 2 stretches are compositionally biased toward basic and acidic residues: residues 38 to 48 (LRTLGVERFEE) and 57 to 74 (GGEE…EYHR). Basic residues-rich tracts occupy residues 75 to 84 (QSSHHIHHPL) and 93 to 109 (RRRK…RRRP). Ser-112, Ser-131, Ser-144, Ser-170, Ser-172, and Ser-239 each carry phosphoserine. Acidic residues predominate over residues 119–132 (TIEEGEEDEEEASE). Thr-253 carries the phosphothreonine modification. Lys-270 bears the N6-methyllysine mark. The disordered stretch occupies residues 285 to 316 (VRKNAKGSTQAAREGREPGPTPRARPRAPHKP). At Ser-439 the chain carries Phosphoserine. The segment at 445 to 466 (SLLGHHHAQGTESDPHVTEPLI) is disordered. Transmembrane regions (helical) follow at residues 704–727 (CLAA…GLLG), 733–770 (LIGV…LLVF), 790–812 (VWIG…SFLV), and 822–843 (IFAF…IKIF). The tract at residues 704-1237 (CLAAVIFIYF…DEYNEMPMPV (534 aa)) is membrane (anion exchange). The Extracellular portion of the chain corresponds to 844–896 (QEHPLHGCSGSNDSEAGSSSSSNMTWATTILVPDNSSASGQSGQEKPRGQPNT). N-linked (GlcNAc...) asparagine glycosylation is found at Asn-855, Asn-866, and Asn-878. A helical membrane pass occupies residues 897-914 (ALLSLVLMAGTFFIAFFL). Over 915-929 (RKFKNSRFFPGRIRR) the chain is Cytoplasmic. The next 5 helical transmembrane spans lie at 930 to 950 (VIGD…DYSI), 984 to 1006 (PFPV…LIFM), 1032 to 1053 (LLLI…LAAA), 1087 to 1132 (VTGL…IQFY), and 1159 to 1195 (MHLF…TVPL). Cys-1169 carries S-palmitoyl cysteine lipidation.

It belongs to the anion exchanger (TC 2.A.31) family. In terms of tissue distribution, expressed in the choroid plexus epithelium (at protein level). Expressed in the parotid gland and sublingual salivary gland acinar cells (at protein level). Widely expressed at similar levels in all tissues examined. Expressed in the testis. As to expression, predominantly expressed in stomach although they are also detected at lower levels in other tissues. Expressed in the testis. In terms of tissue distribution, stomach-specific. Expressed at slightly higher levels in lung and stomach than in other tissues.

It localises to the apical cell membrane. The protein localises to the basolateral cell membrane. The enzyme catalyses hydrogencarbonate(in) + chloride(out) = hydrogencarbonate(out) + chloride(in). With respect to regulation, inhibited by 4,4'-diisothiocyanatostilbene-2,2'-disulfonic acid (DIDS) and acetazolamide. Muscarinic receptor stimulation enhances activity through a Ca(2+)-dependent mechanism. Functionally, sodium-independent anion exchanger which mediates the electroneutral exchange of chloride for bicarbonate ions across the cell membrane. Plays an important role in osteoclast differentiation and function. Regulates bone resorption and calpain-dependent actin cytoskeleton organization in osteoclasts via anion exchange-dependent control of pH. Essential for intracellular pH regulation in CD8(+) T-cells upon CD3 stimulation, modulating CD8(+) T-cell responses. In terms of biological role, plays a critical role in male fertility and spermiogenesis. The protein is Anion exchange protein 2 (Slc4a2) of Mus musculus (Mouse).